The following is a 142-amino-acid chain: Ribonuclease VapC31 (142 aa).

Positions 3 to 139 (LLDANVLLAA…ARFASVRHIR (137 aa)) constitute a PINc domain. Residues D5 and D108 each contribute to the Mg(2+) site.

The protein belongs to the PINc/VapC protein family. Requires Mg(2+) as cofactor.

In terms of biological role, toxic component of a type II toxin-antitoxin (TA) system. An RNase. Its toxic effect is neutralized by coexpression with cognate antitoxin VapB31. This Mycobacterium tuberculosis (strain CDC 1551 / Oshkosh) protein is Ribonuclease VapC31.